The sequence spans 39 residues: Cytochrome b559 subunit beta (39 aa).

The chain crosses the membrane as a helical span at residues 14 to 30 (WLAVHGLAVPTVFFLGS). H18 contributes to the heme binding site.

The protein belongs to the PsbE/PsbF family. Heterodimer of an alpha subunit and a beta subunit. PSII is composed of 1 copy each of membrane proteins PsbA, PsbB, PsbC, PsbD, PsbE, PsbF, PsbH, PsbI, PsbJ, PsbK, PsbL, PsbM, PsbT, PsbX, PsbY, PsbZ, Psb30/Ycf12, at least 3 peripheral proteins of the oxygen-evolving complex and a large number of cofactors. It forms dimeric complexes. It depends on heme b as a cofactor.

It is found in the plastid. The protein resides in the chloroplast thylakoid membrane. Functionally, this b-type cytochrome is tightly associated with the reaction center of photosystem II (PSII). PSII is a light-driven water:plastoquinone oxidoreductase that uses light energy to abstract electrons from H(2)O, generating O(2) and a proton gradient subsequently used for ATP formation. It consists of a core antenna complex that captures photons, and an electron transfer chain that converts photonic excitation into a charge separation. The polypeptide is Cytochrome b559 subunit beta (Cedrus deodara (Deodar cedar)).